Reading from the N-terminus, the 290-residue chain is Acetylglutamate kinase (290 aa).

Substrate contacts are provided by residues 65-66, Arg87, and Asn186; that span reads GG.

Belongs to the acetylglutamate kinase family. ArgB subfamily.

Its subcellular location is the cytoplasm. It catalyses the reaction N-acetyl-L-glutamate + ATP = N-acetyl-L-glutamyl 5-phosphate + ADP. It participates in amino-acid biosynthesis; L-arginine biosynthesis; N(2)-acetyl-L-ornithine from L-glutamate: step 2/4. Its function is as follows. Catalyzes the ATP-dependent phosphorylation of N-acetyl-L-glutamate. The protein is Acetylglutamate kinase of Mycobacterium sp. (strain JLS).